Consider the following 314-residue polypeptide: Electron transfer flavoprotein subunit alpha (314 aa).

253 to 281 (LYVAVGISGAIQHLAGMKDSKVIVAINKD) is a binding site for FAD.

This sequence belongs to the ETF alpha-subunit/FixB family. Heterodimer of an alpha and a beta subunit. Requires FAD as cofactor.

The electron transfer flavoprotein serves as a specific electron acceptor for other dehydrogenases. It transfers the electrons to the main respiratory chain via ETF-ubiquinone oxidoreductase (ETF dehydrogenase). This chain is Electron transfer flavoprotein subunit alpha (etfA), found in Bradyrhizobium diazoefficiens (strain JCM 10833 / BCRC 13528 / IAM 13628 / NBRC 14792 / USDA 110).